The primary structure comprises 250 residues: Acetylglutamate kinase (250 aa).

Substrate contacts are provided by residues 41 to 42 (GG), Arg-63, and Asn-156.

Belongs to the acetylglutamate kinase family. ArgB subfamily.

The protein resides in the cytoplasm. The catalysed reaction is N-acetyl-L-glutamate + ATP = N-acetyl-L-glutamyl 5-phosphate + ADP. It functions in the pathway amino-acid biosynthesis; L-arginine biosynthesis; N(2)-acetyl-L-ornithine from L-glutamate: step 2/4. Its function is as follows. Catalyzes the ATP-dependent phosphorylation of N-acetyl-L-glutamate. The polypeptide is Acetylglutamate kinase (Listeria monocytogenes serotype 4b (strain F2365)).